The primary structure comprises 329 residues: Cuticle collagen 6 (329 aa).

Triple-helical region stretches follow at residues Gly-142–Asp-171, Gly-189–Pro-212, Gly-216–Leu-248, Gly-253–Ser-279, and Gly-282–Cys-320. The tract at residues Pro-146–Tyr-329 is disordered. Residues Asp-156–Glu-173 are compositionally biased toward basic and acidic residues. Residues Pro-187–Pro-199 show a composition bias toward low complexity. Residues Lys-200–Pro-212 are compositionally biased toward pro residues. Pro residues predominate over residues Val-251–Asn-272. The segment covering Pro-273–Gly-282 has biased composition (low complexity). Residues Cys-320–Tyr-329 are compositionally biased toward pro residues.

Belongs to the cuticular collagen family. In terms of assembly, collagen polypeptide chains are complexed within the cuticle by disulfide bonds and other types of covalent cross-links.

Its function is as follows. Nematode cuticles are composed largely of collagen-like proteins. The cuticle functions both as an exoskeleton and as a barrier to protect the worm from its environment. The chain is Cuticle collagen 6 from Caenorhabditis elegans.